A 353-amino-acid polypeptide reads, in one-letter code: Photosystem II D2 protein (353 aa).

N-acetylthreonine is present on T2. A Phosphothreonine modification is found at T2. The chain crosses the membrane as a helical span at residues 41–61 (CAYFALGGWFTGTTFVTSWYT). H118 contributes to the chlorophyll a binding site. Residues 125 to 141 (GFMLRQFELARSVQLRP) traverse the membrane as a helical segment. Pheophytin a is bound by residues Q130 and N143. A helical transmembrane segment spans residues 153 to 166 (VFVSVFLIYPLGQS). H198 is a binding site for chlorophyll a. A helical membrane pass occupies residues 208–228 (AALLCAIHGATVENTLFEDGD). The a plastoquinone site is built by H215 and F262. Position 215 (H215) interacts with Fe cation. Fe cation is bound at residue H269. A helical membrane pass occupies residues 279-295 (GLWMSAIGVVGLALNLR).

Belongs to the reaction center PufL/M/PsbA/D family. PSII is composed of 1 copy each of membrane proteins PsbA, PsbB, PsbC, PsbD, PsbE, PsbF, PsbH, PsbI, PsbJ, PsbK, PsbL, PsbM, PsbT, PsbX, PsbY, PsbZ, Psb30/Ycf12, at least 3 peripheral proteins of the oxygen-evolving complex and a large number of cofactors. It forms dimeric complexes. The D1/D2 heterodimer binds P680, chlorophylls that are the primary electron donor of PSII, and subsequent electron acceptors. It shares a non-heme iron and each subunit binds pheophytin, quinone, additional chlorophylls, carotenoids and lipids. There is also a Cl(-1) ion associated with D1 and D2, which is required for oxygen evolution. The PSII complex binds additional chlorophylls, carotenoids and specific lipids. is required as a cofactor.

The protein resides in the plastid. It localises to the chloroplast thylakoid membrane. The enzyme catalyses 2 a plastoquinone + 4 hnu + 2 H2O = 2 a plastoquinol + O2. Photosystem II (PSII) is a light-driven water:plastoquinone oxidoreductase that uses light energy to abstract electrons from H(2)O, generating O(2) and a proton gradient subsequently used for ATP formation. It consists of a core antenna complex that captures photons, and an electron transfer chain that converts photonic excitation into a charge separation. The D1/D2 (PsbA/PsbD) reaction center heterodimer binds P680, the primary electron donor of PSII as well as several subsequent electron acceptors. D2 is needed for assembly of a stable PSII complex. This chain is Photosystem II D2 protein, found in Agrostis stolonifera (Creeping bentgrass).